The following is a 178-amino-acid chain: Putative RING-H2 finger protein ATL19 (178 aa).

A helical transmembrane segment spans residues 11–31; the sequence is LISVLGLAVFIGLCILLVVLI. An RING-type; atypical zinc finger spans residues 130–172; it reads CAICLSGYVVNEECRVFPVCRHIYHALCIDAWLKNHLTCPTCR.

This sequence belongs to the RING-type zinc finger family. ATL subfamily.

It localises to the membrane. It catalyses the reaction S-ubiquitinyl-[E2 ubiquitin-conjugating enzyme]-L-cysteine + [acceptor protein]-L-lysine = [E2 ubiquitin-conjugating enzyme]-L-cysteine + N(6)-ubiquitinyl-[acceptor protein]-L-lysine.. It functions in the pathway protein modification; protein ubiquitination. This is Putative RING-H2 finger protein ATL19 (ATL19) from Arabidopsis thaliana (Mouse-ear cress).